Consider the following 279-residue polypeptide: Putative pyruvate, phosphate dikinase regulatory protein (279 aa).

152 to 159 contributes to the ADP binding site; it reads GVSRTSKS.

It belongs to the pyruvate, phosphate/water dikinase regulatory protein family. PDRP subfamily.

The enzyme catalyses N(tele)-phospho-L-histidyl/L-threonyl-[pyruvate, phosphate dikinase] + ADP = N(tele)-phospho-L-histidyl/O-phospho-L-threonyl-[pyruvate, phosphate dikinase] + AMP + H(+). The catalysed reaction is N(tele)-phospho-L-histidyl/O-phospho-L-threonyl-[pyruvate, phosphate dikinase] + phosphate + H(+) = N(tele)-phospho-L-histidyl/L-threonyl-[pyruvate, phosphate dikinase] + diphosphate. Functionally, bifunctional serine/threonine kinase and phosphorylase involved in the regulation of the pyruvate, phosphate dikinase (PPDK) by catalyzing its phosphorylation/dephosphorylation. The polypeptide is Putative pyruvate, phosphate dikinase regulatory protein (Anaplasma marginale (strain Florida)).